An 832-amino-acid chain; its full sequence is Protein PPP4R3C (832 aa).

Positions 708–832 (RTQEGEAVMP…SPKKKPHLSS (125 aa)) are disordered. 2 stretches are compositionally biased toward basic and acidic residues: residues 725-735 (FTETKRTHQEG) and 749-765 (METK…DSPK). Low complexity predominate over residues 769–779 (SGDFKFSSSYS). The span at 801–820 (PDDEEEKEEDEEEKEEDKED) shows a compositional bias: acidic residues.

The protein belongs to the SMEK family.

This Homo sapiens (Human) protein is Protein PPP4R3C.